The primary structure comprises 95 residues: Lipolysis-activating peptide 1-beta chain (95 aa).

A signal peptide spans 1-22 (MISVQVIFIAFISIIAFSMVCG). Positions 23-91 (GNVFPNRELG…FLNALEKQCP (69 aa)) constitute an LCN-type CS-alpha/beta domain. 3 cysteine pairs are disulfide-bonded: cysteine 37/cysteine 60, cysteine 45/cysteine 70, and cysteine 49/cysteine 72.

Homodimer; disulfide-linked or monomer (edited version) or heterodimer of an alpha chain (AC P84810) and this beta chain (non-edited version). Expressed by the venom gland.

The protein resides in the secreted. In terms of biological role, the homodimer inhibits HMG-CoA reductase (HMGCR) (32% of inhibition produced by 0.6 uM), a glycoprotein involved in the control of cholesterol biosynthesis. The inhibitory effects of bumarsin are seen at much lower concentrations (0.6 uM) than that for statins such as atorvastatin (5 mM) and simvastatin (10 uM). In addition to inhibition of HMG-CoA reductase, this protein lowers cholesterol levels by inducing steroid hormone synthesis via StAR, and by increasing reverse cholesterol transport mediated by the induction of ABCA1 and APOA1. The heterodimer non-edited LVP1 induces lipolysis in rat adipocytes. Induction of lipolysis by LVP1 appears to be mediated through the beta-2 adrenergic receptor pathway (ADRB2). Intracerebroventricular injection is not toxic to mice. Functionally, the monomer edited version, similar to alpha-toxins, may modulate voltage-gated sodium channels (Nav) and may block voltage-gated potassium channels (Kv). The chain is Lipolysis-activating peptide 1-beta chain from Buthus occitanus tunetanus (Common European scorpion).